Reading from the N-terminus, the 133-residue chain is Fluoride-specific ion channel FluC (133 aa).

The next 4 membrane-spanning stretches (helical) occupy residues 12–32, 41–61, 76–96, and 104–124; these read LAMTGGALGSGLRFAIGASLI, WGTLTVNLLGSFVAGVLLVWL, IVGVIGGLTTFSSLMMECLVF, and MIGIYLAVTLLAGLALVVAGA. Na(+) is bound by residues Gly81 and Thr84.

It belongs to the fluoride channel Fluc/FEX (TC 1.A.43) family.

Its subcellular location is the cell inner membrane. It catalyses the reaction fluoride(in) = fluoride(out). Na(+) is not transported, but it plays an essential structural role and its presence is essential for fluoride channel function. Its function is as follows. Fluoride-specific ion channel. Important for reducing fluoride concentration in the cell, thus reducing its toxicity. The polypeptide is Fluoride-specific ion channel FluC (Xanthomonas euvesicatoria pv. vesicatoria (strain 85-10) (Xanthomonas campestris pv. vesicatoria)).